Here is a 445-residue protein sequence, read N- to C-terminus: tRNA(Ile)-lysidine synthase (445 aa).

Position 33–38 (33–38) interacts with ATP; it reads SGGLDS.

It belongs to the tRNA(Ile)-lysidine synthase family.

It localises to the cytoplasm. The catalysed reaction is cytidine(34) in tRNA(Ile2) + L-lysine + ATP = lysidine(34) in tRNA(Ile2) + AMP + diphosphate + H(+). In terms of biological role, ligates lysine onto the cytidine present at position 34 of the AUA codon-specific tRNA(Ile) that contains the anticodon CAU, in an ATP-dependent manner. Cytidine is converted to lysidine, thus changing the amino acid specificity of the tRNA from methionine to isoleucine. This Pseudomonas syringae pv. tomato (strain ATCC BAA-871 / DC3000) protein is tRNA(Ile)-lysidine synthase.